Here is a 289-residue protein sequence, read N- to C-terminus: 4-diphosphocytidyl-2-C-methyl-D-erythritol kinase (289 aa).

Lysine 10 is a catalytic residue. 94 to 104 contributes to the ATP binding site; sequence PVAAGLAGGSS. The active site involves aspartate 136.

It belongs to the GHMP kinase family. IspE subfamily.

The enzyme catalyses 4-CDP-2-C-methyl-D-erythritol + ATP = 4-CDP-2-C-methyl-D-erythritol 2-phosphate + ADP + H(+). It functions in the pathway isoprenoid biosynthesis; isopentenyl diphosphate biosynthesis via DXP pathway; isopentenyl diphosphate from 1-deoxy-D-xylulose 5-phosphate: step 3/6. Its function is as follows. Catalyzes the phosphorylation of the position 2 hydroxy group of 4-diphosphocytidyl-2C-methyl-D-erythritol. The chain is 4-diphosphocytidyl-2-C-methyl-D-erythritol kinase from Bacillus anthracis.